The primary structure comprises 427 residues: Histidine--tRNA ligase (427 aa).

The protein belongs to the class-II aminoacyl-tRNA synthetase family. In terms of assembly, homodimer.

The protein localises to the cytoplasm. It carries out the reaction tRNA(His) + L-histidine + ATP = L-histidyl-tRNA(His) + AMP + diphosphate + H(+). The polypeptide is Histidine--tRNA ligase (Alteromonas mediterranea (strain DSM 17117 / CIP 110805 / LMG 28347 / Deep ecotype)).